The primary structure comprises 1026 residues: Multidrug resistance protein MdtC (1026 aa).

The Cytoplasmic segment spans residues 1 to 6 (MRFFAL). The chain crosses the membrane as a helical span at residues 7–29 (FIYRPVATILIAAAITLCGILGF). Residues 30-335 (RLLPVAPLPQ…TIRASLQEVE (306 aa)) are Periplasmic-facing. A helical membrane pass occupies residues 336-353 (ETLAISVALVILVVFLFL). Residues 354–359 (RSGRAT) lie on the Cytoplasmic side of the membrane. Residues 360-379 (LIPAVAVPVSLIGTFAAMYL) traverse the membrane as a helical segment. The Periplasmic segment spans residues 380-388 (CGFSLNNLS). Residues 389-411 (LMALTIATGFVVDDAIVVLENIA) traverse the membrane as a helical segment. The Cytoplasmic portion of the chain corresponds to 412–430 (RHLEAGMKPLQAALQGTRE). The chain crosses the membrane as a helical span at residues 431–453 (VGFTVISMSLSLVAVFLPLLLMG). Topologically, residues 454–467 (GLPGRLLREFAVTL) are periplasmic. The helical transmembrane segment at 468–490 (SVAIGISLVVSLTLTPMMCGWML) threads the bilayer. Topologically, residues 491–852 (KSSKPRTQPR…QVFQQTMNSQ (362 aa)) are cytoplasmic. A helical transmembrane segment spans residues 853 to 875 (LILIVAAIATVYIVLGILYESYV). The Periplasmic portion of the chain corresponds to 876-894 (HPLTILSTLPSAGVGALLA). The chain crosses the membrane as a helical span at residues 895 to 917 (LELFNAPFSLIALIGIMLLIGIV). At 918 to 947 (KKNAIMMVDFALEAQRSGGLTPEQAIFQAC) the chain is on the cytoplasmic side. A helical membrane pass occupies residues 948 to 970 (LLRFRPIMMTTLAALFGALPLVL). The Periplasmic segment spans residues 971–984 (SGGDGSELRQPLGI). A helical transmembrane segment spans residues 985–1007 (TIVGGLVMSQLLTLYTTPVVYLF). Over 1008-1026 (FDRLRLRFSRKNSKPVVEI) the chain is Cytoplasmic.

The protein belongs to the resistance-nodulation-cell division (RND) (TC 2.A.6) family. MdtC subfamily. Part of a tripartite efflux system composed of MdtA, MdtB and MdtC. MdtC forms a heteromultimer with MdtB.

The protein resides in the cell inner membrane. This is Multidrug resistance protein MdtC from Salmonella typhimurium (strain LT2 / SGSC1412 / ATCC 700720).